A 123-amino-acid chain; its full sequence is Integration host factor subunit alpha (123 aa).

The disordered stretch occupies residues 97–123; the sequence is NANGTASSMSSSANAAAGDKSESASGT. Residues 102-113 are compositionally biased toward low complexity; the sequence is ASSMSSSANAAA.

This sequence belongs to the bacterial histone-like protein family. Heterodimer of an alpha and a beta chain.

Its function is as follows. This protein is one of the two subunits of integration host factor, a specific DNA-binding protein that functions in genetic recombination as well as in transcriptional and translational control. The polypeptide is Integration host factor subunit alpha (Rhodopseudomonas palustris (strain HaA2)).